A 41-amino-acid chain; its full sequence is Ornatin-A3 (41 aa).

Residues 33 to 35 (RGD) carry the Cell attachment site motif.

This sequence belongs to the ornatin family.

The protein resides in the secreted. Its function is as follows. Potent inhibitor of fibrinogen interaction with platelet receptors expressed on glycoprotein IIb-IIIa complex. May prevent blood from clotting during either feeding and/or storage of ingested blood. The chain is Ornatin-A3 from Placobdella ornata (Turtle leech).